We begin with the raw amino-acid sequence, 521 residues long: Probable glycogen synthase (521 aa).

Belongs to the glycosyltransferase 1 family. Bacterial/plant glycogen synthase subfamily.

The catalysed reaction is [(1-&gt;4)-alpha-D-glucosyl](n) + ADP-alpha-D-glucose = [(1-&gt;4)-alpha-D-glucosyl](n+1) + ADP + H(+). It participates in glycan biosynthesis; glycogen biosynthesis. In terms of biological role, synthesizes alpha-1,4-glucan chains using ADP-glucose. In Methanocaldococcus jannaschii (strain ATCC 43067 / DSM 2661 / JAL-1 / JCM 10045 / NBRC 100440) (Methanococcus jannaschii), this protein is Probable glycogen synthase (glgA).